Reading from the N-terminus, the 558-residue chain is Polysialic acid transport protein KpsD (558 aa).

The N-terminal stretch at 1 to 20 is a signal peptide; sequence MKLFKSILLIAACHAAQASA.

The protein to E.coli K1 KpsD.

Its subcellular location is the periplasm. Functionally, involved in the translocation of the polysialic acid capsule across the outer membrane to the cell surface. May function as the periplasmic binding element of the PSA transport system, in which it transiently interacts with the membrane component of the transporter, binds polysaccharide and transports the polymer to a component in the outer membrane. In Escherichia coli, this protein is Polysialic acid transport protein KpsD (kpsD).